An 80-amino-acid chain; its full sequence is Large ribosomal subunit protein bL31B (80 aa).

This sequence belongs to the bacterial ribosomal protein bL31 family. Type B subfamily. Part of the 50S ribosomal subunit.

The chain is Large ribosomal subunit protein bL31B from Exiguobacterium sp. (strain ATCC BAA-1283 / AT1b).